A 186-amino-acid polypeptide reads, in one-letter code: Nicotinamide-nucleotide adenylyltransferase (186 aa).

This sequence belongs to the archaeal NMN adenylyltransferase family.

It localises to the cytoplasm. It catalyses the reaction beta-nicotinamide D-ribonucleotide + ATP + H(+) = diphosphate + NAD(+). It functions in the pathway cofactor biosynthesis; NAD(+) biosynthesis; NAD(+) from nicotinamide D-ribonucleotide: step 1/1. The protein is Nicotinamide-nucleotide adenylyltransferase of Pyrococcus horikoshii (strain ATCC 700860 / DSM 12428 / JCM 9974 / NBRC 100139 / OT-3).